Reading from the N-terminus, the 181-residue chain is Early E3 20.3 kDa glycoprotein (181 aa).

N-linked (GlcNAc...) asparagine; by host glycans are attached at residues Asn-29, Asn-57, Asn-70, and Asn-75.

The protein belongs to the adenoviridae E3_20 family.

Functionally, E3 proteins seem to be dispensable for virus growth in tissue culture cells. They are potentially important for virus growth under special conditions; E3 region may help adenoviruses to evade the immune surveillance of the host. The sequence is that of Early E3 20.3 kDa glycoprotein from Human adenovirus B serotype 11 (strain Slobiski) (HAdV-11).